The following is a 275-amino-acid chain: NH(3)-dependent NAD(+) synthetase (275 aa).

46 to 53 (GISGGQDS) provides a ligand contact to ATP. Position 52 (D52) interacts with Mg(2+). A deamido-NAD(+)-binding site is contributed by R140. Residue T160 participates in ATP binding. A Mg(2+)-binding site is contributed by E165. Residues K173 and D180 each contribute to the deamido-NAD(+) site. ATP contacts are provided by K189 and T211. Residue 260 to 261 (HK) coordinates deamido-NAD(+).

It belongs to the NAD synthetase family. As to quaternary structure, homodimer.

It carries out the reaction deamido-NAD(+) + NH4(+) + ATP = AMP + diphosphate + NAD(+) + H(+). Its pathway is cofactor biosynthesis; NAD(+) biosynthesis; NAD(+) from deamido-NAD(+) (ammonia route): step 1/1. Catalyzes the ATP-dependent amidation of deamido-NAD to form NAD. Uses ammonia as a nitrogen source. The protein is NH(3)-dependent NAD(+) synthetase of Shigella boydii serotype 18 (strain CDC 3083-94 / BS512).